The primary structure comprises 472 residues: uncharacterized protein (472 aa).

It localises to the mitochondrion. This is an uncharacterized protein from Saccharomyces cerevisiae (strain ATCC 204508 / S288c) (Baker's yeast).